The chain runs to 881 residues: Serine/threonine-protein kinase/endoribonuclease IRE1b (881 aa).

The first 21 residues, 1-21 (MRGSALLDLILFLLVSPLAHS), serve as a signal peptide directing secretion. Over 22-357 (FKGSEISKFY…KQAGFASKFS (336 aa)) the chain is Lumenal. An N-linked (GlcNAc...) asparagine glycan is attached at asparagine 115. The chain crosses the membrane as a helical span at residues 358–378 (GLIVLIFGFCVTMLSVCGLFF). The Cytoplasmic portion of the chain corresponds to 379–881 (YRLRQSIRIK…FFKYSKTTVF (503 aa)). A Protein kinase domain is found at 459–744 (FVSNKEIAKG…AQDVMHHPLF (286 aa)). Residues 465–473 (IAKGSNGTV) and lysine 487 contribute to the ATP site. The segment at 481–502 (GRLVAVKRLVQSHHDVAQKEIL) is ATP selon article. Aspartate 608 acts as the Proton acceptor in catalysis. The disordered stretch occupies residues 642 to 661 (LTRNSTGLGSGSSGWQAPEQ). In terms of domain architecture, KEN spans 747–878 (SDMRLSFLRD…EEFFFKYSKT (132 aa)).

The protein belongs to the protein kinase superfamily. Ser/Thr protein kinase family. As to quaternary structure, homodimer; disulfide-linked. Dimer formation is driven by hydrophobic interactions within the N-terminal luminal domains and stabilized by disulfide bridges. Mg(2+) serves as cofactor. Autophosphorylated. Ubiquitous. Detected in the apical meristem, at leaf margins where vascular bundles end, in the anthers before pollen is formed and in the ovules at a very early stage of development. There is no expression in more mature embryos. Also strongly expressed in the cotyledons immediately after germination but not later on.

The protein localises to the endoplasmic reticulum membrane. The catalysed reaction is L-seryl-[protein] + ATP = O-phospho-L-seryl-[protein] + ADP + H(+). It carries out the reaction L-threonyl-[protein] + ATP = O-phospho-L-threonyl-[protein] + ADP + H(+). With respect to regulation, the kinase domain is activated by trans-autophosphorylation. Kinase activity is required for activation of the endoribonuclease domain. Functionally, senses unfolded proteins in the lumen of the endoplasmic reticulum via its N-terminal domain which leads to enzyme auto-activation. The active endoribonuclease domain splices bZIP60 mRNA to generate a new C-terminus, converting it into a potent unfolded-protein response transcriptional activator which then induces transcription of UPR target genes. Involved in organ growth regulation. Plays a role in plant immunity and abiotic stress responses. Required for ER stress-induced autophagy. In Arabidopsis thaliana (Mouse-ear cress), this protein is Serine/threonine-protein kinase/endoribonuclease IRE1b (IRE1B).